We begin with the raw amino-acid sequence, 215 residues long: Urease accessory protein UreG (215 aa).

Residue 11 to 18 (GPVGAGKS) coordinates GTP.

The protein belongs to the SIMIBI class G3E GTPase family. UreG subfamily. In terms of assembly, homodimer. UreD, UreF and UreG form a complex that acts as a GTP-hydrolysis-dependent molecular chaperone, activating the urease apoprotein by helping to assemble the nickel containing metallocenter of UreC. The UreE protein probably delivers the nickel.

The protein resides in the cytoplasm. In terms of biological role, facilitates the functional incorporation of the urease nickel metallocenter. This process requires GTP hydrolysis, probably effectuated by UreG. The polypeptide is Urease accessory protein UreG (Cenarchaeum symbiosum (strain A)).